Here is a 109-residue protein sequence, read N- to C-terminus: MSFAGVLADADVKAALAGCAAADSFNYKTFFKACGLAAKSHEEVKKAFFVIDQDQSGFIEEDELKLFLQTFGAGARELTAAETKAFLAAGDEDGDGMIGVDEFVTLVKA.

At Ser2 the chain carries N-acetylserine. 2 EF-hand domains span residues 39 to 74 and 78 to 109; these read KSHE…FGAG and LTAA…LVKA. The Ca(2+) site is built by Asp52, Asp54, Ser56, Phe58, Glu60, Glu63, Asp91, Asp93, Asp95, Met97, and Glu102.

This sequence belongs to the parvalbumin family.

In terms of biological role, in muscle, parvalbumin is thought to be involved in relaxation after contraction. It binds two calcium ions. The chain is Parvalbumin beta-1 from Gadus chalcogrammus (Alaska pollock).